A 152-amino-acid polypeptide reads, in one-letter code: ATP synthase epsilon chain 2 (152 aa).

Belongs to the ATPase epsilon chain family. As to quaternary structure, F-type ATPases have 2 components, CF(1) - the catalytic core - and CF(0) - the membrane proton channel. CF(1) has five subunits: alpha(3), beta(3), gamma(1), delta(1), epsilon(1). CF(0) has three main subunits: a, b and c.

Its subcellular location is the cell inner membrane. Its function is as follows. Produces ATP from ADP in the presence of a proton gradient across the membrane. This Burkholderia orbicola (strain AU 1054) protein is ATP synthase epsilon chain 2.